Consider the following 723-residue polypeptide: Nicastrin (723 aa).

The first 16 residues, 1–16 (MKKWLVIVLIIAGIRC), serve as a signal peptide directing secretion. Topologically, residues 17 to 678 (DGFSDQVFRT…ESVNLYLMED (662 aa)) are extracellular. Residues asparagine 40, asparagine 181, asparagine 271, asparagine 328, asparagine 409, and asparagine 627 are each glycosylated (N-linked (GlcNAc...) asparagine). Residues 679–699 (ASFEYTMILIAVISALLSIFA) traverse the membrane as a helical segment. Residues 700-723 (VGRCSETTFIVDEGEPAAEGGEPL) lie on the Cytoplasmic side of the membrane.

This sequence belongs to the nicastrin family. As to quaternary structure, component of the gamma-secretase complex, a complex probably composed of the presenilin homodimer (sel-12, hop-1 or spe-4), nicastrin (aph-2), aph-1 and pen-2.

It is found in the membrane. In terms of biological role, essential subunit of the gamma-secretase complex, an endoprotease complex that catalyzes the intramembrane cleavage of integral membrane proteins such as Notch (glp-1 or lin-12). It may represents a stabilizing cofactor required for the assembly of the gamma-secretase complex. The sequence is that of Nicastrin (aph-2) from Caenorhabditis elegans.